Consider the following 95-residue polypeptide: Probable FAD-linked sulfhydryl oxidase OPG072 (95 aa).

Residues Met-1–Arg-8 are Intravirion-facing. Residues Met-1 to Leu-95 enclose the ERV/ALR sulfhydryl oxidase domain. The helical transmembrane segment at Ala-9–Gly-25 threads the bilayer. The Virion surface portion of the chain corresponds to Asn-26 to Leu-95. A disulfide bond links Cys-43 and Cys-46.

The protein belongs to the orthopoxvirus OPG072 family. Interacts with OPG128; this interaction involves formation of a transient disulfide-bonded intermediate, allowing disulfide bond transfer. FAD serves as cofactor.

It is found in the virion membrane. The protein localises to the host cytoplasm. It carries out the reaction 2 R'C(R)SH + O2 = R'C(R)S-S(R)CR' + H2O2. FAD-dependent sulfhydryl oxidase that catalyzes disulfide bond formation. The complete pathway for formation of disulfide bonds in intracellular virion membrane proteins sequentially involves thiol-disulfide transfer between OPG072, OPG128 and OPG088. This Vaccinia virus (strain Copenhagen) (VACV) protein is Probable FAD-linked sulfhydryl oxidase OPG072 (OPG072).